The sequence spans 95 residues: Aspartyl/glutamyl-tRNA(Asn/Gln) amidotransferase subunit C (95 aa).

The protein belongs to the GatC family. Heterotrimer of A, B and C subunits.

The enzyme catalyses L-glutamyl-tRNA(Gln) + L-glutamine + ATP + H2O = L-glutaminyl-tRNA(Gln) + L-glutamate + ADP + phosphate + H(+). The catalysed reaction is L-aspartyl-tRNA(Asn) + L-glutamine + ATP + H2O = L-asparaginyl-tRNA(Asn) + L-glutamate + ADP + phosphate + 2 H(+). Functionally, allows the formation of correctly charged Asn-tRNA(Asn) or Gln-tRNA(Gln) through the transamidation of misacylated Asp-tRNA(Asn) or Glu-tRNA(Gln) in organisms which lack either or both of asparaginyl-tRNA or glutaminyl-tRNA synthetases. The reaction takes place in the presence of glutamine and ATP through an activated phospho-Asp-tRNA(Asn) or phospho-Glu-tRNA(Gln). In Chromobacterium violaceum (strain ATCC 12472 / DSM 30191 / JCM 1249 / CCUG 213 / NBRC 12614 / NCIMB 9131 / NCTC 9757 / MK), this protein is Aspartyl/glutamyl-tRNA(Asn/Gln) amidotransferase subunit C.